The sequence spans 904 residues: HTH-type transcriptional regulator MalT (904 aa).

An ATP-binding site is contributed by 39 to 46; that stretch reads CPAGYGKT. The HTH luxR-type domain maps to 832–897; sequence ELIRTSPLTQ…EAVQQAQQLL (66 aa). Positions 856–875 form a DNA-binding region, H-T-H motif; that stretch reads NDQIAGELAVAATTIKTHIR.

This sequence belongs to the MalT family. Monomer in solution. Oligomerizes to an active state in the presence of the positive effectors ATP and maltotriose.

Activated by ATP and maltotriose, which are both required for DNA binding. Its function is as follows. Positively regulates the transcription of the maltose regulon whose gene products are responsible for uptake and catabolism of malto-oligosaccharides. Specifically binds to the promoter region of its target genes, recognizing a short DNA motif called the MalT box. The chain is HTH-type transcriptional regulator MalT from Serratia proteamaculans (strain 568).